The sequence spans 184 residues: ATP synthase subunit b, chloroplastic (184 aa).

Residues 27-49 form a helical membrane-spanning segment; sequence LATNPINLSIVIGVLIFFGKGVL.

The protein belongs to the ATPase B chain family. In terms of assembly, F-type ATPases have 2 components, F(1) - the catalytic core - and F(0) - the membrane proton channel. F(1) has five subunits: alpha(3), beta(3), gamma(1), delta(1), epsilon(1). F(0) has four main subunits: a(1), b(1), b'(1) and c(10-14). The alpha and beta chains form an alternating ring which encloses part of the gamma chain. F(1) is attached to F(0) by a central stalk formed by the gamma and epsilon chains, while a peripheral stalk is formed by the delta, b and b' chains.

It localises to the plastid. The protein localises to the chloroplast thylakoid membrane. F(1)F(0) ATP synthase produces ATP from ADP in the presence of a proton or sodium gradient. F-type ATPases consist of two structural domains, F(1) containing the extramembraneous catalytic core and F(0) containing the membrane proton channel, linked together by a central stalk and a peripheral stalk. During catalysis, ATP synthesis in the catalytic domain of F(1) is coupled via a rotary mechanism of the central stalk subunits to proton translocation. Functionally, component of the F(0) channel, it forms part of the peripheral stalk, linking F(1) to F(0). The protein is ATP synthase subunit b, chloroplastic of Lotus japonicus (Lotus corniculatus var. japonicus).